Consider the following 150-residue polypeptide: Anti-sigma F factor (150 aa).

Belongs to the anti-sigma-factor family.

It catalyses the reaction L-seryl-[protein] + ATP = O-phospho-L-seryl-[protein] + ADP + H(+). The catalysed reaction is L-threonyl-[protein] + ATP = O-phospho-L-threonyl-[protein] + ADP + H(+). Binds to sigma F and blocks its ability to form an RNA polymerase holoenzyme (E-sigma F). Phosphorylates SpoIIAA on a serine residue. This phosphorylation may enable SpoIIAA to act as an anti-anti-sigma factor that counteracts SpoIIAB and thus releases sigma F from inhibition. This chain is Anti-sigma F factor, found in Pasteuria penetrans.